Consider the following 371-residue polypeptide: Cell division cycle-associated protein 7 (371 aa).

Disordered regions lie at residues 60 to 110 (TRSQ…EDES) and 140 to 188 (PGSF…SRIL). The segment covering 94-103 (PSENSVTDSN) has biased composition (polar residues). Serine 142 bears the Phosphoserine mark. An interaction with MYC region spans residues 146–170 (RHPLPGSDSQSRRPRRRTFPGVASR). The Nuclear localization signal motif lies at 160-176 (RRRTFPGVASRRNPERR). Phosphothreonine is present on threonine 163. Serine 190 bears the Phosphoserine mark. Lysine 204 is covalently cross-linked (Glycyl lysine isopeptide (Lys-Gly) (interchain with G-Cter in SUMO2)). The mediates transcriptional activity stretch occupies residues 247–371 (EEELENVCSN…SLKQEFEMQA (125 aa)).

As to quaternary structure, interacts with MYC (via C-terminus), YWHAE and YWHAZ. In terms of processing, phosphorylation at Thr-163 promotes interaction with YWHAE and YWHAZ, dissociation from MYC and sequestration in the cytoplasm. In vitro, phosphorylated at Thr-163 by AKT. In terms of tissue distribution, ubiquitous with higher level in thymus and small intestine. Overexpressed in a large number of tumors, in blood from patients with acute myelogenous leukemia (AML) and in chronic myelogenous leukemia (CML) blast crisis.

The protein resides in the nucleus. The protein localises to the cytoplasm. In terms of biological role, participates in MYC-mediated cell transformation and apoptosis; induces anchorage-independent growth and clonogenicity in lymphoblastoid cells. Insufficient to induce tumorigenicity when overexpressed but contributes to MYC-mediated tumorigenesis. May play a role as transcriptional regulator. This Homo sapiens (Human) protein is Cell division cycle-associated protein 7 (CDCA7).